Here is a 115-residue protein sequence, read N- to C-terminus: Transcription initiation factor IIA subunit 2 (115 aa).

The protein belongs to the TFIIA subunit 2 family. As to quaternary structure, TFIIA is a heterodimer of the large unprocessed subunit 1 and a small subunit gamma.

It is found in the nucleus. Functionally, TFIIA is a component of the transcription machinery of RNA polymerase II and plays an important role in transcriptional activation. TFIIA in a complex with tbp mediates transcriptional activity. The sequence is that of Transcription initiation factor IIA subunit 2 (gtf2a2) from Dictyostelium discoideum (Social amoeba).